Here is a 159-residue protein sequence, read N- to C-terminus: Transcriptional repressor NrdR (159 aa).

Polar residues predominate over residues 1–11 (MQCPSCQNTDS). The segment at 1–20 (MQCPSCQNTDSRVLESRSAD) is disordered. A zinc finger spans residues 3–34 (CPSCQNTDSRVLESRSADSGRSVRRRRECLNC). Positions 49 to 139 (INVLKRSGAK…VYRQFNGIND (91 aa)) constitute an ATP-cone domain.

This sequence belongs to the NrdR family. Zn(2+) is required as a cofactor.

Its function is as follows. Negatively regulates transcription of bacterial ribonucleotide reductase nrd genes and operons by binding to NrdR-boxes. The polypeptide is Transcriptional repressor NrdR (Prochlorococcus marinus (strain NATL1A)).